We begin with the raw amino-acid sequence, 492 residues long: Fascin-2 (492 aa).

Belongs to the fascin family. Localized specifically in the outer and inner segments of the photoreceptor cells in the retina.

It is found in the cytoplasm. The protein localises to the cytoskeleton. The protein resides in the cell projection. Its subcellular location is the stereocilium. Acts as an actin bundling protein. May play a pivotal role in photoreceptor cell-specific events, such as disk morphogenesis. In Homo sapiens (Human), this protein is Fascin-2 (FSCN2).